The following is a 273-amino-acid chain: tRNA pseudouridine synthase B (273 aa).

The Nucleophile role is filled by Asp-38.

The protein belongs to the pseudouridine synthase TruB family. Type 1 subfamily.

The catalysed reaction is uridine(55) in tRNA = pseudouridine(55) in tRNA. Its function is as follows. Responsible for synthesis of pseudouridine from uracil-55 in the psi GC loop of transfer RNAs. This chain is tRNA pseudouridine synthase B, found in Campylobacter curvus (strain 525.92).